The chain runs to 558 residues: REST corepressor spr-1 (558 aa).

Residues 1–106 are disordered; the sequence is MDLYDDDGES…KVKGPLSNTN (106 aa). Residues 36-56 show a composition bias toward acidic residues; that stretch reads TIEENVPEVEENTLLEEDSLV. Residues 69 to 80 show a composition bias toward basic residues; it reads KPSKSKRKRKRS. In terms of domain architecture, ELM2 spans 107–192; sequence KEINVGTEFQ…SAIAEVARRN (86 aa). The SANT 1 domain occupies 193-244; the sequence is ELKDVWTDQEITLFENCYQIFGKNFSQIRSALCHRSLQSIVQFYYESKKRVK. A GATA-type zinc finger spans residues 271-325; the sequence is AIFESMCDNCGEKAENMQINNAMNRPECRACLIYFNQTGVPRPTSLRLVLAERIR. Polar residues predominate over residues 378-402; it reads CTENGNVGETSSPSAQKTEIQSESD. The disordered stretch occupies residues 378–406; sequence CTENGNVGETSSPSAQKTEIQSESDGSGP. In terms of domain architecture, SANT 2 spans 481–532; it reads HYSQDWTQLERSQVIRCFNMYGAHFEHIADVIGTKTPDQVYQFYLENQKAID.

It belongs to the CoREST family. In terms of assembly, probably part of a large repressor complex. Interacts with histone demethylase spr-5/lsd-1.

It is found in the nucleus. In terms of biological role, probable corepressor protein, which probably participates in the transcriptional repression of the presenilin protein hop-1. Probably acts via the formation of a multiprotein complex that deacetylates and demethylates specific sites on histones. Acts redundantly with the transcriptional repressor lin-35 to play a role in vulval morphogenesis and promote germline proliferation. The sequence is that of REST corepressor spr-1 from Caenorhabditis elegans.